A 186-amino-acid polypeptide reads, in one-letter code: Acireductone dioxygenase (186 aa).

Residues histidine 96, histidine 98, glutamate 102, and histidine 140 each contribute to the Fe(2+) site. 4 residues coordinate Ni(2+): histidine 96, histidine 98, glutamate 102, and histidine 140.

Belongs to the acireductone dioxygenase (ARD) family. In terms of assembly, monomer. It depends on Fe(2+) as a cofactor. The cofactor is Ni(2+).

It carries out the reaction 1,2-dihydroxy-5-(methylsulfanyl)pent-1-en-3-one + O2 = 3-(methylsulfanyl)propanoate + CO + formate + 2 H(+). The enzyme catalyses 1,2-dihydroxy-5-(methylsulfanyl)pent-1-en-3-one + O2 = 4-methylsulfanyl-2-oxobutanoate + formate + 2 H(+). It functions in the pathway amino-acid biosynthesis; L-methionine biosynthesis via salvage pathway; L-methionine from S-methyl-5-thio-alpha-D-ribose 1-phosphate: step 5/6. In terms of biological role, catalyzes 2 different reactions between oxygen and the acireductone 1,2-dihydroxy-3-keto-5-methylthiopentene (DHK-MTPene) depending upon the metal bound in the active site. Fe-containing acireductone dioxygenase (Fe-ARD) produces formate and 2-keto-4-methylthiobutyrate (KMTB), the alpha-ketoacid precursor of methionine in the methionine recycle pathway. Ni-containing acireductone dioxygenase (Ni-ARD) produces methylthiopropionate, carbon monoxide and formate, and does not lie on the methionine recycle pathway. This Methylococcus capsulatus (strain ATCC 33009 / NCIMB 11132 / Bath) protein is Acireductone dioxygenase.